The primary structure comprises 91 residues: Small ribosomal subunit protein uS17 (91 aa).

Belongs to the universal ribosomal protein uS17 family. Part of the 30S ribosomal subunit.

Functionally, one of the primary rRNA binding proteins, it binds specifically to the 5'-end of 16S ribosomal RNA. The polypeptide is Small ribosomal subunit protein uS17 (Malacoplasma penetrans (strain HF-2) (Mycoplasma penetrans)).